The sequence spans 86 residues: Testis-expressed protein 54 (86 aa).

The span at 1-34 (MGCCQDKNRWASDEQARDEVTEDGREGNEVDNSG) shows a compositional bias: basic and acidic residues. 2 disordered regions span residues 1 to 43 (MGCC…SNES) and 57 to 86 (SRRE…PEKG).

In terms of tissue distribution, expressed in Testis.

The polypeptide is Testis-expressed protein 54 (Mus musculus (Mouse)).